Consider the following 103-residue polypeptide: Glycoprotein 24B (103 aa).

It belongs to the csb family. O-glycosylated.

Its subcellular location is the cell surface. Its function is as follows. Cell-cell adhesion during early development. This is Glycoprotein 24B (csbB) from Dictyostelium discoideum (Social amoeba).